We begin with the raw amino-acid sequence, 468 residues long: Interstitial collagenase (468 aa).

The first 18 residues, 1-18, serve as a signal peptide directing secretion; that stretch reads MPGLPLLLLLLWGVGSHG. The propeptide at 19 to 98 is activation peptide; it reads FPAASETQEQ…PRCGVPDVAQ (80 aa). The short motif at 89 to 96 is the Cysteine switch element; that stretch reads PRCGVPDV. A Zn(2+)-binding site is contributed by Cys-91. Asn-119 is a glycosylation site (N-linked (GlcNAc...) asparagine). Residues Asp-123 and Asp-157 each coordinate Ca(2+). Zn(2+)-binding residues include His-167 and Asp-169. 4 residues coordinate Ca(2+): Asp-174, Gly-175, Glu-177, and Gln-179. Position 182 (His-182) interacts with Zn(2+). Positions 189, 191, and 193 each coordinate Ca(2+). His-195 contributes to the Zn(2+) binding site. Residues Asp-197, Glu-198, and Asp-200 each contribute to the Ca(2+) site. A Zn(2+)-binding site is contributed by His-217. Residue Glu-218 is part of the active site. Residues His-221 and His-227 each coordinate Zn(2+). The residue at position 273 (Thr-273) is a Phosphothreonine. Hemopexin repeat units follow at residues 274–323, 324–370, 373–421, and 422–465; these read PKVC…WPHL, PNGL…FGFP, VNHI…FPGI, and GNKV…WFNC. Residues Cys-277 and Cys-465 are joined by a disulfide bond. Asp-284 and Gln-328 together coordinate Ca(2+). Tyr-359 bears the Phosphotyrosine; by PKDCC mark. 2 residues coordinate Ca(2+): Asp-377 and Asp-426.

This sequence belongs to the peptidase M10A family. Requires Ca(2+) as cofactor. The cofactor is Zn(2+). Post-translationally, tyrosine phosphorylated in platelets by PKDCC/VLK.

Its subcellular location is the secreted. The protein resides in the extracellular space. It localises to the extracellular matrix. It catalyses the reaction Cleavage of the triple helix of collagen at about three-quarters of the length of the molecule from the N-terminus, at 775-Gly-|-Ile-776 in the alpha1(I) chain. Cleaves synthetic substrates and alpha-macroglobulins at bonds where P1' is a hydrophobic residue.. With respect to regulation, can be activated without removal of the activation peptide. In terms of biological role, cleaves collagens of types I, II, and III at one site in the helical domain. Also cleaves collagens of types VII and X. The polypeptide is Interstitial collagenase (MMP1) (Oryctolagus cuniculus (Rabbit)).